The primary structure comprises 278 residues: Complement component 1 Q subcomponent-binding protein, mitochondrial (278 aa).

The transit peptide at Met-1–Gly-70 directs the protein to the mitochondrion. Positions Thr-73 to Glu-90 are C1q binding. Ser-84 is subject to Phosphoserine. An N6-acetyllysine mark is found at Lys-88 and Lys-91. Residues Ile-136–Pro-164 are disordered. The interaction with MAVS stretch occupies residues Phe-166–Ala-209. Phosphotyrosine is present on Tyr-185. Residues Ser-197 and Ser-201 each carry the phosphoserine modification. Phosphothreonine is present on Thr-210.

The protein belongs to the MAM33 family. As to quaternary structure, homotrimer; three monomers form a donut-shaped structure with an unusually asymmetric charge distribution on the surface. Interacts with CDK13, HRK, VTN, NFYB, ADRA1B, FOXC1, DDX21, DDX50, NCL, SRSF1 and SRSF9. Interacts with CD93; the association may represent a cell surface C1q receptor. Interacts with KRT1; the association represents a cell surface kininogen receptor. Interacts with CD209; the interaction is indicative for a C1q:C1QBP:CD209 signaling complex. Interacts with FBL and RRP1; the respective interactions with C1QBP are competitive. Probably associates with the mitoribosome. Interacts with MAVS; the interaction occurs upon viral transfection. Interacts with PPIF. Interacts with U2AF1L4. Interacts with PLEKHN1. Interacts with VGF-derived peptide TLQP-21. Interacts with MRE11 and RAD50; forming the MRC (MRE11-RAD50-C1QBP) complex that inhibits the activity of MRE11.

It is found in the mitochondrion matrix. The protein localises to the nucleus. The protein resides in the cell membrane. It localises to the secreted. Its subcellular location is the cytoplasm. It is found in the nucleolus. Multifunctional and multicompartmental protein involved in inflammation and infection processes, ribosome biogenesis, protein synthesis in mitochondria, regulation of apoptosis, transcriptional regulation and pre-mRNA splicing. At the cell surface is thought to act as an endothelial receptor for plasma proteins of the complement and kallikrein-kinin cascades. Putative receptor for C1q; specifically binds to the globular 'heads' of C1q thus inhibiting C1; may perform the receptor function through a complex with C1qR/CD93. In complex with cytokeratin-1/KRT1 is a high affinity receptor for kininogen-1/HMWK. Can also bind other plasma proteins, such as coagulation factor XII leading to its autoactivation. May function to bind initially fluid kininogen-1 to the cell membrane. The secreted form may enhance both extrinsic and intrinsic coagulation pathways. It is postulated that the cell surface form requires docking with transmembrane proteins for downstream signaling which might be specific for a cell-type or response. By acting as C1q receptor is involved in chemotaxis of immature dendritic cells and neutrophils and is proposed to signal through CD209/DC-SIGN on immature dendritic cells, through integrin alpha-4/beta-1 during trophoblast invasion of the decidua, and through integrin beta-1 during endothelial cell adhesion and spreading. Signaling involved in inhibition of innate immune response is implicating the PI3K-AKT/PKB pathway. Required for protein synthesis in mitochondria. In mitochondrial translation may be involved in formation of functional 55S mitoribosomes; the function seems to involve its RNA-binding activity. Acts as a RNA modification reader, which specifically recognizes and binds mitochondrial RNAs modified by C5-methylcytosine (m5C) in response to stress, and promotes recruitment of the mitochondrial degradosome complex, leading to their degradation. May be involved in the nucleolar ribosome maturation process; the function may involve the exchange of FBL for RRP1 in the association with pre-ribosome particles. Involved in regulation of RNA splicing by inhibiting the RNA-binding capacity of SRSF1 and its phosphorylation. Is required for the nuclear translocation of splicing factor U2AF1L4. Involved in regulation of CDKN2A- and HRK-mediated apoptosis. Stabilizes mitochondrial CDKN2A isoform smARF. May be involved in regulation of FOXC1 transcriptional activity and NFY/CCAAT-binding factor complex-mediated transcription. May play a role in antibacterial defense as it can bind to cell surface hyaluronan and inhibit Streptococcus pneumoniae hyaluronate lyase. May be involved in modulation of the immune response; ligation by HCV core protein is resulting in suppression of interleukin-12 production in monocyte-derived dendritic cells. Involved in regulation of antiviral response by inhibiting RIGI- and IFIH1-mediated signaling pathways probably involving its association with MAVS after viral infection. Acts as a regulator of DNA repair via homologous recombination by inhibiting the activity of MRE11: interacts with unphosphorylated MRE11 and RAD50 in absence of DNA damage, preventing formation and activity of the MRN complex. Following DNA damage, dissociates from phosphorylated MRE11, allowing formation of the MRN complex. This is Complement component 1 Q subcomponent-binding protein, mitochondrial (C1QBP) from Bos taurus (Bovine).